Reading from the N-terminus, the 198-residue chain is FMN-dependent NADH:quinone oxidoreductase (198 aa).

Residues Ser-10 and 16-18 contribute to the FMN site; that span reads SIS.

Belongs to the azoreductase type 1 family. As to quaternary structure, homodimer. It depends on FMN as a cofactor.

It catalyses the reaction 2 a quinone + NADH + H(+) = 2 a 1,4-benzosemiquinone + NAD(+). It carries out the reaction N,N-dimethyl-1,4-phenylenediamine + anthranilate + 2 NAD(+) = 2-(4-dimethylaminophenyl)diazenylbenzoate + 2 NADH + 2 H(+). In terms of biological role, quinone reductase that provides resistance to thiol-specific stress caused by electrophilic quinones. Also exhibits azoreductase activity. Catalyzes the reductive cleavage of the azo bond in aromatic azo compounds to the corresponding amines. This is FMN-dependent NADH:quinone oxidoreductase from Mycoplasmopsis pulmonis (strain UAB CTIP) (Mycoplasma pulmonis).